The sequence spans 1066 residues: FHIP family protein GI14169 (1066 aa).

Polar residues predominate over residues 1-11 (MSWLRTSPLRQ). A disordered region spans residues 1 to 35 (MSWLRTSPLRQSLTRSGSSSGNGSSGTATTMRQRP). Residues 12 to 30 (SLTRSGSSSGNGSSGTATT) show a composition bias toward low complexity. Phosphoserine is present on S500. A disordered region spans residues 651–682 (GIDVTTTTTASASDTDLEHNNNSSSISSGRRD). Positions 655–678 (TTTTTASASDTDLEHNNNSSSISS) are enriched in low complexity. Phosphoserine is present on S820. Disordered regions lie at residues 821 to 913 (PLHQ…GNSA) and 935 to 1007 (SGGE…TGNF). The span at 822-855 (LHQQLQHQQQHQQLAQTNSHTQQQQQQQQQQAQQ) shows a compositional bias: low complexity. Positions 856–874 (RSTYATLSAATPVQASPTS) are enriched in polar residues. Residues 890–913 (SRSITSMFSRRSTSSTPASNGNSA) show a composition bias toward low complexity. Polar residues predominate over residues 947–971 (QDSTRGNTCETSLSTAPRQEPQTNV). Residues 972–997 (GSSSNSSIGSSTQTLSGTHSSSTLHG) are compositionally biased toward low complexity.

Belongs to the FHIP family.

The polypeptide is FHIP family protein GI14169 (Drosophila mojavensis (Fruit fly)).